The following is a 228-amino-acid chain: Carboxy-S-adenosyl-L-methionine synthase (228 aa).

S-adenosyl-L-methionine-binding positions include Y30, G55–S57, D79–N80, and D103–V104.

It belongs to the class I-like SAM-binding methyltransferase superfamily. Cx-SAM synthase family.

It carries out the reaction prephenate + S-adenosyl-L-methionine = carboxy-S-adenosyl-L-methionine + 3-phenylpyruvate + H2O. Functionally, catalyzes the conversion of S-adenosyl-L-methionine (SAM) to carboxy-S-adenosyl-L-methionine (Cx-SAM). In Staphylococcus epidermidis (strain ATCC 35984 / DSM 28319 / BCRC 17069 / CCUG 31568 / BM 3577 / RP62A), this protein is Carboxy-S-adenosyl-L-methionine synthase.